Here is a 335-residue protein sequence, read N- to C-terminus: Protein PXR1 (335 aa).

In terms of domain architecture, G-patch spans 25-71 (KSRFGHKYLEKLGWEPGKGLGHASHAMSTHIKVTIKDDTMGLGAKLK). The interval 155–310 (DDAEDAKVSG…PPTISTRLSV (156 aa)) is disordered. The segment covering 163–175 (SGKHRDRKSRAKR) has biased composition (basic residues). The span at 183 to 209 (LKEKCRDIDRTRKSKRKEKEQEKEKNR) shows a compositional bias: basic and acidic residues. A compositionally biased stretch (basic residues) spans 226 to 257 (KKDKKDKKEKKEKKEKKEKKEKKHKEKSNKRL).

This sequence belongs to the PINX1 family.

Its subcellular location is the nucleus. It is found in the nucleolus. In terms of biological role, involved in rRNA-processing at A0, A1 and A2 sites and negatively regulates telomerase. In Eremothecium gossypii (strain ATCC 10895 / CBS 109.51 / FGSC 9923 / NRRL Y-1056) (Yeast), this protein is Protein PXR1 (PXR1).